Consider the following 363-residue polypeptide: 3-isopropylmalate dehydrogenase (363 aa).

78 to 91 is a binding site for NAD(+); the sequence is GPKWEHLPPDQQPE. Substrate contacts are provided by R99, R109, R138, and D227. Mg(2+)-binding residues include D227, D251, and D255. 285 to 297 provides a ligand contact to NAD(+); that stretch reads GSAPDIAGKNIAN.

This sequence belongs to the isocitrate and isopropylmalate dehydrogenases family. LeuB type 1 subfamily. As to quaternary structure, homodimer. Mg(2+) serves as cofactor. Mn(2+) is required as a cofactor.

The protein localises to the cytoplasm. It carries out the reaction (2R,3S)-3-isopropylmalate + NAD(+) = 4-methyl-2-oxopentanoate + CO2 + NADH. The protein operates within amino-acid biosynthesis; L-leucine biosynthesis; L-leucine from 3-methyl-2-oxobutanoate: step 3/4. With respect to regulation, requires K(+) ions for optimum activity. Its function is as follows. Catalyzes the oxidation of 3-carboxy-2-hydroxy-4-methylpentanoate (3-isopropylmalate) to 3-carboxy-4-methyl-2-oxopentanoate. The product decarboxylates to 4-methyl-2 oxopentanoate. The chain is 3-isopropylmalate dehydrogenase from Escherichia coli (strain K12).